The sequence spans 122 residues: Small ribosomal subunit protein uS13 (122 aa).

The disordered stretch occupies residues 99–122 (RGQRTHTNARTRKGPAKAIAGKKK).

The protein belongs to the universal ribosomal protein uS13 family. Part of the 30S ribosomal subunit. Forms a loose heterodimer with protein S19. Forms two bridges to the 50S subunit in the 70S ribosome.

Functionally, located at the top of the head of the 30S subunit, it contacts several helices of the 16S rRNA. In the 70S ribosome it contacts the 23S rRNA (bridge B1a) and protein L5 of the 50S subunit (bridge B1b), connecting the 2 subunits; these bridges are implicated in subunit movement. Contacts the tRNAs in the A and P-sites. The polypeptide is Small ribosomal subunit protein uS13 (Rhizobium leguminosarum bv. trifolii (strain WSM2304)).